A 346-amino-acid polypeptide reads, in one-letter code: Zinc-type alcohol dehydrogenase-like protein C1773.06c (346 aa).

It belongs to the zinc-containing alcohol dehydrogenase family. Quinone oxidoreductase subfamily.

It localises to the cytoplasm. This chain is Zinc-type alcohol dehydrogenase-like protein C1773.06c, found in Schizosaccharomyces pombe (strain 972 / ATCC 24843) (Fission yeast).